A 134-amino-acid polypeptide reads, in one-letter code: Large ribosomal subunit protein bL17 (134 aa).

The protein belongs to the bacterial ribosomal protein bL17 family. Part of the 50S ribosomal subunit. Contacts protein L32.

The chain is Large ribosomal subunit protein bL17 from Thioalkalivibrio sulfidiphilus (strain HL-EbGR7).